A 662-amino-acid polypeptide reads, in one-letter code: Potassium channel KAT3 (662 aa).

Residues Met-1 to Glu-90 are Cytoplasmic-facing. Residues Leu-91–Glu-111 traverse the membrane as a helical segment. Residues Lys-112–Leu-118 lie on the Extracellular side of the membrane. A helical transmembrane segment spans residues Leu-119 to Val-139. The Cytoplasmic portion of the chain corresponds to Ser-140–Ser-163. The chain crosses the membrane as a helical span at residues Val-164–Thr-184. Residues Gly-185–Gly-194 are Extracellular-facing. Residues Phe-195–Glu-215 form a helical; Voltage-sensor membrane-spanning segment. Topologically, residues Lys-216–Lys-229 are cytoplasmic. Residues Leu-230–Tyr-250 form a helical membrane-spanning segment. The Extracellular segment spans residues His-251 to Thr-277. Residues Tyr-278–Ala-297 constitute an intramembrane region (pore-forming). Residues Val-298–Arg-301 are Extracellular-facing. A helical transmembrane segment spans residues Glu-302–Gly-322. Over Ile-323–Phe-662 the chain is Cytoplasmic. Leu-406–Leu-527 serves as a coordination point for a nucleoside 3',5'-cyclic phosphate. Residues Lys-528–Ser-558 adopt a coiled-coil conformation. Residues Arg-591 to Phe-662 enclose the KHA domain.

Belongs to the potassium channel family. Plant (TC 1.A.1.4) subfamily. As to quaternary structure, the potassium channel is probably composed of a homo- or heterotetrameric complex of pore-forming subunits. May interact with AKT1 and AKT2. Interacts with SLAC1. In terms of tissue distribution, expressed predominantly in root hairs and root endodermis and, at a lower level, in leaf nodes, trichomes, and hydathodes.

It is found in the membrane. Its function is as follows. Probable modulatory (alpha) subunit of inward-rectifying potassium channels. Could mediate potassium uptake from the soil solution by plant roots in association with AKT1. This Arabidopsis thaliana (Mouse-ear cress) protein is Potassium channel KAT3 (KAT3).